The sequence spans 122 residues: Hexon-interlacing protein (122 aa).

Positions 72–106 (VTELNESIDELQQKMTELEKRLKIMEEKIEEIKLA) form a coiled coil.

This sequence belongs to the adenoviridae hexon-interlacing protein family. In terms of assembly, homotrimer. Interacts with hexon protein; this interaction tethers the hexons together. Self-interacts with adjacent proteins. Interacts with kinesin light chain KLC1; this interaction leads to capsid disruption at the nuclear pore complex during virus entry into host cell.

Its subcellular location is the virion. It localises to the host nucleus. Structural component of the virion that acts as a cement protein on the capsid exterior and forms triskelion structures consisting of three molecules that stabilize three hexon trimers at the center of each icosahedral facet and fixes the peripentonal hexons. Dispensable for assembly. During virus entry, recruits the anterograde motor kinesin-1 to the capsid docked at the nuclear pore complex thereby subjecting the docked capsid to a pulling force. The resulting tension leads to capsid disruption, dispersion of capsid fragments toward cell periphery and eventually viral DNA entry into the host nucleus. This Tupaiidae (tree shrews) protein is Hexon-interlacing protein.